The sequence spans 90 residues: Mitochondrial import inner membrane translocase subunit TIM8 (90 aa).

A Twin CX3C motif motif is present at residues 44–70 (CFKKCNANKPITSGTLDSSEEQCLTNC). Disulfide bonds link Cys44-Cys70 and Cys48-Cys66.

It belongs to the small Tim family. Heterohexamer; composed of 3 copies of TIM8 and 3 copies of TIM13, named soluble 70 kDa complex. Associates with the TIM22 complex, whose core is composed of TIM22 and TIM54. Interacts with the transmembrane regions of multi-pass transmembrane proteins in transit.

It localises to the mitochondrion inner membrane. Mitochondrial intermembrane chaperone that participates in the import and insertion of some multi-pass transmembrane proteins into the mitochondrial inner membrane. Also required for the transfer of beta-barrel precursors from the TOM complex to the sorting and assembly machinery (SAM complex) of the outer membrane. Acts as a chaperone-like protein that protects the hydrophobic precursors from aggregation and guide them through the mitochondrial intermembrane space. The TIM8-TIM13 complex is non essential and only mediates the import of few proteins, while the predominant TIM9-TIM10 70 kDa complex is crucial and mediates the import of much more proteins. The chain is Mitochondrial import inner membrane translocase subunit TIM8 (TIM8) from Debaryomyces hansenii (strain ATCC 36239 / CBS 767 / BCRC 21394 / JCM 1990 / NBRC 0083 / IGC 2968) (Yeast).